Reading from the N-terminus, the 149-residue chain is Aspartate 1-decarboxylase (149 aa).

S25 serves as the catalytic Schiff-base intermediate with substrate; via pyruvic acid. S25 is subject to Pyruvic acid (Ser). T57 contributes to the substrate binding site. Y58 (proton donor) is an active-site residue. G73–A75 lines the substrate pocket. The segment at G119–A149 is disordered.

The protein belongs to the PanD family. Heterooctamer of four alpha and four beta subunits. Pyruvate serves as cofactor. Is synthesized initially as an inactive proenzyme, which is activated by self-cleavage at a specific serine bond to produce a beta-subunit with a hydroxyl group at its C-terminus and an alpha-subunit with a pyruvoyl group at its N-terminus.

It localises to the cytoplasm. The catalysed reaction is L-aspartate + H(+) = beta-alanine + CO2. It participates in cofactor biosynthesis; (R)-pantothenate biosynthesis; beta-alanine from L-aspartate: step 1/1. Catalyzes the pyruvoyl-dependent decarboxylation of aspartate to produce beta-alanine. This Parafrankia sp. (strain EAN1pec) protein is Aspartate 1-decarboxylase.